The sequence spans 212 residues: Thymidylate kinase (212 aa).

9–16 provides a ligand contact to ATP; it reads GIDGCGKT.

This sequence belongs to the thymidylate kinase family.

The enzyme catalyses dTMP + ATP = dTDP + ADP. In terms of biological role, phosphorylation of dTMP to form dTDP in both de novo and salvage pathways of dTTP synthesis. This chain is Thymidylate kinase, found in Synechococcus sp. (strain CC9311).